The primary structure comprises 226 residues: Cold-regulated 413 inner membrane protein 2, chloroplastic (226 aa).

The transit peptide at 1-76 (MASLCLSSSR…RKRGSSVVCY (76 aa)) directs the protein to the chloroplast. Topologically, residues 77 to 79 (ATP) are stromal. The helical transmembrane segment at 80 to 100 (MLSVHNLQWISTISCVALMFA) threads the bilayer. Residues 101–103 (RGT) are Chloroplast intermembrane-facing. A helical membrane pass occupies residues 104–124 (GIHKSFVVPLFALQAPMGIVS). Residues 125 to 129 (WMKGE) lie on the Stromal side of the membrane. A helical transmembrane segment spans residues 130-150 (YGIWAAFLALLTRLFFSFPVE). Residues 151–152 (LE) lie on the Chloroplast intermembrane side of the membrane. The helical transmembrane segment at 153-173 (LPFIALLLVIVAPYQVMSIRG) threads the bilayer. The Stromal segment spans residues 174 to 176 (KQE). Residues 177-197 (GAILSLAISCFLAFQHFSRAG) traverse the membrane as a helical segment. Residues 198–205 (TLQKAFDQ) are Chloroplast intermembrane-facing. The helical transmembrane segment at 206-226 (NSVLATVAIIGVTVVSFLFLI) threads the bilayer.

The protein belongs to the Cold-regulated 413 protein family.

The protein resides in the plastid. Its subcellular location is the chloroplast inner membrane. This chain is Cold-regulated 413 inner membrane protein 2, chloroplastic (COR413IM2), found in Arabidopsis thaliana (Mouse-ear cress).